The following is a 208-amino-acid chain: Uracil phosphoribosyltransferase (208 aa).

5-phospho-alpha-D-ribose 1-diphosphate contacts are provided by residues Arg-78, Arg-103, and 130–138 (DPMLATGGS). Residues Ile-193 and 198-200 (GDA) each bind uracil. Position 199 (Asp-199) interacts with 5-phospho-alpha-D-ribose 1-diphosphate.

Belongs to the UPRTase family. The cofactor is Mg(2+).

The catalysed reaction is UMP + diphosphate = 5-phospho-alpha-D-ribose 1-diphosphate + uracil. Its pathway is pyrimidine metabolism; UMP biosynthesis via salvage pathway; UMP from uracil: step 1/1. With respect to regulation, allosterically activated by GTP. Functionally, catalyzes the conversion of uracil and 5-phospho-alpha-D-ribose 1-diphosphate (PRPP) to UMP and diphosphate. The protein is Uracil phosphoribosyltransferase of Klebsiella pneumoniae (strain 342).